The primary structure comprises 902 residues: MKIAVIGQSLFGREVYRELLKEGHQVVGVFTIPDKNGKADPLGADAEKDGIPVFKFPRWRVKGQAIPEVVEKYKALEAELNVLPFCSQFIPMEVIDCPKHGSIIYHPSILPRHRGASAINWTLMQGDKIGGFTVFWADDGLDTGDILLQRQCEVLPDDTVNTIYNRFLFPEGVKGMVEAVRLIAEGNAPRIKQPTEGATYDPMQKKENAKINWDQPAEDIHNFIRGNDKVPGAWTVVDDQQLTFFGSSFTRNGPAPDGQPLEIPGASRPALVTKTGLVLFGNDGERLTVKNIQFEDGKMIPASQYFKTADSAALQLSEEEQKVSEEIRAAWRRILTNVSEIEDSTDFFKAGAASMDVVRLVEEVKLKCNGLQLQNEDVYMATKFEEFIQMVVRRMRGEDGEEELVIDYVEKEINNMTVKIPHQLFINGQFMDAEGGKSYDTINPTDGTAICKVSLAQISDIDRAVAAAKEAFENGEWGKMNPRDRGRLLYRLADLMEEHQEELATIESIDSGAVYTLALKTHVGMSIQTFRYFAGWCDKIQGRTIPINQARPNRNLTFTRREPIGVCGIVIPWNYPLMMLAWKTAACLTAGNTVVLKPAQVTPLTALKFAELSVKAGIPKGVINILPGAGSLIGQRLSDHPDVRKIGFTGSTPIGKQIMKSCAVSNVKKVSLELGGKSPLIIFHDCDLDKAVRMGMSSVFFNKGENCIAAGRLFLEESIHDEFVKRVVEEVKKMKIGDPLDRSTDHGPQNHKAHLDKLIEYCQTGVKEGGKLVYGGKQVERPGFFFEPTIFTDVTDEMFIAKEESFGPVMIISKFNDGDIDGVLKRANDSEFGLASGVFTKDINKALYVSEKLQAGTVFVNTYNKTDVAAPFGGFKQSGFGKDLGEEALNEYLKTKAVTIEY.

The segment at 1–310 (MKIAVIGQSL…PASQYFKTAD (310 aa)) is hydrolase domain. 88-90 (QFI) provides a ligand contact to (6R)-10-formyltetrahydrofolate. Residue His-106 is the Proton donor of the active site. A (6R)-10-formyltetrahydrofolate-binding site is contributed by Asp-142. One can recognise a Carrier domain in the interval 318–395 (EEEQKVSEEI…EFIQMVVRRM (78 aa)). The residue at position 354 (Ser-354) is an O-(pantetheine 4'-phosphoryl)serine. Residues 417–902 (TVKIPHQLFI…LKTKAVTIEY (486 aa)) are aldehyde dehydrogenase domain. NADP(+) is bound by residues 571–573 (IPW), 597–600 (KPAQ), 630–635 (GSLIGQ), 650–651 (GS), and 673–674 (EL). Glu-673 serves as the catalytic Proton acceptor. The Proton donor role is filled by Cys-707. Residues Lys-757 and 804 to 806 (ESF) each bind NADP(+).

In the N-terminal section; belongs to the GART family. This sequence in the C-terminal section; belongs to the aldehyde dehydrogenase family. ALDH1L subfamily. Homotetramer. Phosphopantetheinylation at Ser-354 by AASDHPPT is required for the formyltetrahydrofolate dehydrogenase activity.

Its subcellular location is the cytoplasm. The protein localises to the cytosol. It catalyses the reaction (6R)-10-formyltetrahydrofolate + NADP(+) + H2O = (6S)-5,6,7,8-tetrahydrofolate + CO2 + NADPH + H(+). In terms of biological role, cytosolic 10-formyltetrahydrofolate dehydrogenase that catalyzes the NADP(+)-dependent conversion of 10-formyltetrahydrofolate to tetrahydrofolate and carbon dioxide. May also have an NADP(+)-dependent aldehyde dehydrogenase activity towards formaldehyde, acetaldehyde, propionaldehyde, and benzaldehyde. The sequence is that of Cytosolic 10-formyltetrahydrofolate dehydrogenase (aldh1l1) from Xenopus laevis (African clawed frog).